Reading from the N-terminus, the 265-residue chain is uncharacterized protein (265 aa).

Disordered regions lie at residues 62–94 (RNKK…ALGK) and 118–149 (MVPG…RPNP). The segment covering 126–139 (DGPKKSDTDIKDAV) has biased composition (basic and acidic residues).

This is an uncharacterized protein from Homo sapiens (Human).